A 133-amino-acid polypeptide reads, in one-letter code: MANHDPISDMLTRIRNASEKRHETTKIPASRMTRSIAKVLQQEGFISEISEQGEGIRTELVLALKYSGKHRLPTIRSMQRVSKPGLRIYKNTRGLPKVLGGLGVAIISTSKGVMSDRDARREGVGGEVLCYVY.

It belongs to the universal ribosomal protein uS8 family. In terms of assembly, part of the 30S ribosomal subunit. Contacts proteins S5 and S12.

In terms of biological role, one of the primary rRNA binding proteins, it binds directly to 16S rRNA central domain where it helps coordinate assembly of the platform of the 30S subunit. In Synechococcus sp. (strain CC9605), this protein is Small ribosomal subunit protein uS8.